Here is a 380-residue protein sequence, read N- to C-terminus: Cytochrome b (380 aa).

A run of 4 helical transmembrane segments spans residues 33–53 (FGSL…FLAM), 77–98 (WLIR…FIHV), 113–133 (WNIG…GYVL), and 178–198 (FFAF…VHLL). Positions 83 and 97 each coordinate heme b. Heme b is bound by residues His182 and His196. His201 provides a ligand contact to a ubiquinone. The next 4 membrane-spanning stretches (helical) occupy residues 226–246 (IKDL…VLFF), 288–308 (LGGV…PLLN), 320–340 (LTQF…WIGG), and 347–367 (FTTI…VLMP).

It belongs to the cytochrome b family. In terms of assembly, the cytochrome bc1 complex contains 11 subunits: 3 respiratory subunits (MT-CYB, CYC1 and UQCRFS1), 2 core proteins (UQCRC1 and UQCRC2) and 6 low-molecular weight proteins (UQCRH/QCR6, UQCRB/QCR7, UQCRQ/QCR8, UQCR10/QCR9, UQCR11/QCR10 and a cleavage product of UQCRFS1). This cytochrome bc1 complex then forms a dimer. Heme b is required as a cofactor.

The protein localises to the mitochondrion inner membrane. Its function is as follows. Component of the ubiquinol-cytochrome c reductase complex (complex III or cytochrome b-c1 complex) that is part of the mitochondrial respiratory chain. The b-c1 complex mediates electron transfer from ubiquinol to cytochrome c. Contributes to the generation of a proton gradient across the mitochondrial membrane that is then used for ATP synthesis. This is Cytochrome b (MT-CYB) from Thomasomys notatus (Distinguished oldfield mouse).